We begin with the raw amino-acid sequence, 457 residues long: Argininosuccinate lyase (457 aa).

The protein belongs to the lyase 1 family. Argininosuccinate lyase subfamily.

The protein localises to the cytoplasm. It carries out the reaction 2-(N(omega)-L-arginino)succinate = fumarate + L-arginine. It functions in the pathway amino-acid biosynthesis; L-arginine biosynthesis; L-arginine from L-ornithine and carbamoyl phosphate: step 3/3. In Escherichia coli O157:H7, this protein is Argininosuccinate lyase.